The sequence spans 314 residues: PDZ domain-containing protein GIPC2 (314 aa).

Over residues 1–12 (MPLGLRGKKKAA) the composition is skewed to basic residues. The interval 1 to 36 (MPLGLRGKKKAAKSKETARLVEGERSGGSQGVPGPP) is disordered. A compositionally biased stretch (basic and acidic residues) spans 13-25 (KSKETARLVEGER). In terms of domain architecture, PDZ spans 117–197 (EVNVYKSEDS…EELFTLQLIE (81 aa)).

Belongs to the GIPC family. Probably interacts with SEMA5A.

The protein resides in the cytoplasm. This Rattus norvegicus (Rat) protein is PDZ domain-containing protein GIPC2 (Gipc2).